Here is a 218-residue protein sequence, read N- to C-terminus: MTQDELKKAVGWAALDYVKPGTIVGVGTGSTAAHFIDALGSIKHQIEGAVSSSDASTAKLKSYGIPVFDCNDVDVLDIYVDGADEINGQMQMIKGGGAALTREKIIAAIARKFICIADESKQVGVLGKFPLPVEVIPMARSYVARELIKLGGLPEYRQNVLTDNGNVILDVHNLSILDAIALENQINGIAGVVTVGLFANRGADVALIGTANGVKVIG.

Substrate is bound by residues 28 to 31 (TGST), 81 to 84 (DGAD), and 94 to 97 (KGGG). The Proton acceptor role is filled by Glu-103. Substrate is bound at residue Lys-121.

Belongs to the ribose 5-phosphate isomerase family. In terms of assembly, homodimer.

The enzyme catalyses aldehydo-D-ribose 5-phosphate = D-ribulose 5-phosphate. The protein operates within carbohydrate degradation; pentose phosphate pathway; D-ribose 5-phosphate from D-ribulose 5-phosphate (non-oxidative stage): step 1/1. In terms of biological role, catalyzes the reversible conversion of ribose-5-phosphate to ribulose 5-phosphate. The sequence is that of Ribose-5-phosphate isomerase A from Yersinia pseudotuberculosis serotype IB (strain PB1/+).